We begin with the raw amino-acid sequence, 774 residues long: Potassium/sodium hyperpolarization-activated cyclic nucleotide-gated channel 3 (774 aa).

The segment at 1–48 is disordered; it reads MEAEQRPAAGASEGATPGLEAVPPVAPPPATAASGPIPKSGPEPKRRH. Topologically, residues 1–97 are cytoplasmic; sequence MEAEQRPAAG…PYSDFRFYWD (97 aa). The segment at 46-91 is involved in subunit assembly; sequence RRHLGTLLQPTVNKFSLRVFGSHKAVEIEQERVKSAGAWIIHPYSD. The helical transmembrane segment at 98 to 118 threads the bilayer; it reads LIMLLLMVGNLIVLPVGITFF. The Extracellular segment spans residues 119 to 124; it reads KEENSP. Residues 125 to 145 traverse the membrane as a helical segment; sequence PWIVFNVLSDTFFLLDLVLNF. Residues 146 to 171 lie on the Cytoplasmic side of the membrane; the sequence is RTGIVVEEGAEILLAPRAIRTRYLRT. A helical membrane pass occupies residues 172-192; sequence WFLVDLISSIPVDYIFLVVEL. The Extracellular portion of the chain corresponds to 193–201; sequence EPRLDAEVY. The helical; Voltage-sensor transmembrane segment at 202-222 threads the bilayer; the sequence is KTARALRIVRFTKILSLLRLL. Residues 223 to 253 lie on the Cytoplasmic side of the membrane; sequence RLSRLIRYIHQWEEIFHMTYDLASAVVRIFN. A helical transmembrane segment spans residues 254–274; sequence LIGMMLLLCHWDGCLQFLVPM. The Extracellular segment spans residues 275–297; the sequence is LQDFPPDCWVSINHMVNHSWGRQ. Residue asparagine 291 is glycosylated (N-linked (GlcNAc...) asparagine). Residues 298–319 constitute an intramembrane region (pore-forming); it reads YSHALFKAMSHMLCIGYGQQAP. Residues 320–329 lie on the Extracellular side of the membrane; it reads VGMPDVWLTM. Residues 330–350 form a helical membrane-spanning segment; the sequence is LSMIVGATCYAMFIGHATALI. The Cytoplasmic portion of the chain corresponds to 351–774; it reads QSLDSSRRQY…PRGLQLSANM (424 aa). The interval 354–774 is interaction with KCTD3; that stretch reads DSSRRQYQEK…PRGLQLSANM (421 aa). 3',5'-cyclic AMP contacts are provided by glycine 492, glutamate 493, cysteine 495, arginine 502, threonine 503, arginine 543, and arginine 546. Serine 634 is modified (phosphoserine). The tract at residues 682 to 774 is disordered; that stretch reads SLSRAGRSQV…PRGLQLSANM (93 aa). A compositionally biased stretch (pro residues) spans 751–763; sequence TAQPPRPPVPEPA.

This sequence belongs to the potassium channel HCN family. In terms of assembly, homotetramer. The potassium channel is composed of a homo- or heterotetrameric complex of pore-forming subunits. Interacts with HCN11. Interacts with KCTD3; this interaction increases cell surface expression and current density of this channel. Interacts with PEX5L. In terms of tissue distribution, detected in brain.

The protein localises to the cell membrane. It carries out the reaction K(+)(in) = K(+)(out). The catalysed reaction is Na(+)(in) = Na(+)(out). With respect to regulation, unlike HCN2 and HCN4, HCN3 is insensitive to cyclic nucleotides, such as cAMP or cGMP. This lack of sensitivity of HCN3, despite harboring a functional cyclic nucleotide-binding domain (CNBD), may be explained by its shorter C-terminal sequence, which may alter the normal autoinhibition of the channel. Inhibited by Cs(1+) and ZD7288. Phosphatidylinositol-4,5-bisphosphate (PIP(2)) shifts HCN3 activation to more depolarized potentials and accelerated activation kinetics. In terms of biological role, hyperpolarization-activated ion channel that are permeable to sodium and potassium ions, with an about 3:1 preference for potassium ions. Contributes to the native pacemaker currents in heart (If) and in neurons (Ih). In particular, plays a pivotal role in maintaining excitability and promoting rhythmic burst firing within hypothalamic nuclei. Exerts a significant influence on the configuration of the cardiac action potential waveform. Does not appear to play a prominent role in the processing of acute, neuropathic, or inflammatory pain. In Homo sapiens (Human), this protein is Potassium/sodium hyperpolarization-activated cyclic nucleotide-gated channel 3 (HCN3).